The following is a 506-amino-acid chain: Plant intracellular Ras-group-related LRR protein 1 (506 aa).

Residues 24-48 are disordered; it reads TAKSSSSSDVEPPPSKSDPSSSSNH. Residues 143-193 adopt a coiled-coil conformation; sequence KSILKLNELHESYEKLLKEAEERLVRIYESAEKNAAAVAEEEAAEVEVNEE. LRR repeat units follow at residues 203–225, 226–249, 251–272, 273–295, 297–319, 320–342, 344–364, 365–389, 390–412, and 414–436; these read ENPLDRVDLSGRKLKLLPEAFGK, IQGLLVLNLYNNQLQAIPDSIAGL, NLLELDVSTNFLETLPDSIGLL, SKLKILNVSCNKLTTLPDSICHC, SLVVLDASYNNLTYLPTNIGFEL, VKLEKLLIHLNKIRSLPTSIGEM, SLRYLDAHFNELNGLPNSFGL, LTNLEYLNLSSNFSDLQDLPASFGD, LISLQELDLSNNQIHSLPDAFGT, and VNLTKLNLDQNPLVVPPDEVVKQ. Residues 437–449 carry the GVYW motif; that stretch reads GVDAVKMYMGKRW.

The protein belongs to the SHOC2 family. As to expression, widely expressed.

In terms of biological role, leucine-rich repeat protein that likely mediates protein interactions, possibly in the context of signal transduction. PIRL1 acts redundantly with PIRL9 in the differentiation of microspores into pollen. The protein is Plant intracellular Ras-group-related LRR protein 1 (PIRL1) of Arabidopsis thaliana (Mouse-ear cress).